Here is a 256-residue protein sequence, read N- to C-terminus: Neuroendocrine secretory protein 55 (256 aa).

Residues 1–46 (MDRRSRAHQWRRARHNYNDLCPPIGRRAATALLWLSCSIALLRALA) form the signal peptide. The tract at residues 61-256 (SFLNAHHRSA…RKGPIPIRRH (196 aa)) is disordered. Basic and acidic residues predominate over residues 86–103 (ESDHEHEEAEPELARPEC). Composition is skewed to acidic residues over residues 104–139 (LEYD…ETEP) and 206–216 (LDEDPRDPEES). The segment covering 225–236 (QPRRCKTRRPAR) has biased composition (basic residues).

Belongs to the NESP55 family. Binds keratan sulfate chains. In terms of processing, may be proteolytically processed to give rise to a number of active peptides.

Its subcellular location is the cytoplasmic vesicle. The protein localises to the secretory vesicle. The protein resides in the synaptic vesicle. It localises to the secreted. The polypeptide is Neuroendocrine secretory protein 55 (Rattus norvegicus (Rat)).